The following is a 264-amino-acid chain: Small ribosomal subunit protein uS3 (264 aa).

One can recognise a KH type-2 domain in the interval 39–107 (VRDFLKKKLK…PVHVNIEEIR (69 aa)). The disordered stretch occupies residues 211–264 (NDAPVVEEPQDDRRRRPGRPEGRRREGEGRPGGNRRGGAGAGRRAAPGDAKSGE). A compositionally biased stretch (basic and acidic residues) spans 221–239 (DDRRRRPGRPEGRRREGEG). A compositionally biased stretch (gly residues) spans 240–251 (RPGGNRRGGAGA).

Belongs to the universal ribosomal protein uS3 family. As to quaternary structure, part of the 30S ribosomal subunit. Forms a tight complex with proteins S10 and S14.

Binds the lower part of the 30S subunit head. Binds mRNA in the 70S ribosome, positioning it for translation. This is Small ribosomal subunit protein uS3 from Cupriavidus pinatubonensis (strain JMP 134 / LMG 1197) (Cupriavidus necator (strain JMP 134)).